The following is a 483-amino-acid chain: E3 ubiquitin-protein ligase TRIM50 (483 aa).

The segment at 16-57 (CPICLEVFKEPLMLQCGHSYCKNCLDSLSEHLDSELRCPVCR) adopts an RING-type zinc-finger fold. The segment at 84 to 125 (TEPTVCVHHRNPLSLFCEKDQEFICGLCGLLGSHQHHRVTPV) adopts a B box-type zinc-finger fold. 4 residues coordinate Zn(2+): Cys89, His92, Cys111, and His117. 2 coiled-coil regions span residues 127-169 (TVYS…NESD) and 203-236 (GLVA…GNES). Positions 275 to 474 (DIKLTVWKRL…LPMVLPPPSA (200 aa)) constitute a B30.2/SPRY domain. Lys372 carries the N6-acetyllysine modification.

Belongs to the TRIM/RBCC family. Can form dimers and trimers. Interacts with several E2 ubiquitin-conjugating enzymes, including UBE2L6, UBE2E1, UBE2E3. No interaction with UBE2H. Interacts with BECN1. Interacts with SQSTM1. Interacts with NLRP3. Auto-ubiquitinated. Post-translationally, acetylated by EP300 and KAT2B. HDAC6 drives TRIM50 deacetylation. Acetylation antagonizes with TRIM50 ubiquitination.

Its subcellular location is the cytoplasm. It carries out the reaction S-ubiquitinyl-[E2 ubiquitin-conjugating enzyme]-L-cysteine + [acceptor protein]-L-lysine = [E2 ubiquitin-conjugating enzyme]-L-cysteine + N(6)-ubiquitinyl-[acceptor protein]-L-lysine.. In terms of biological role, E3 ubiquitin-protein ligase that ubiquitinates Beclin-1/BECN1 in a 'Lys-63'-dependent manner enhancing its binding to ULK1. In turn, promotes starvation-induced autophagy activation. Also interacts with p62/SQSTM1 protein and thereby induces the formation and the autophagy clearance of aggresome-associated polyubiquitinated proteins through HDAC6 interaction. Also promotes NLRP3 inflammasome activation by directly inducing NLRP3 oligomerization independent of its E3 ligase function. The chain is E3 ubiquitin-protein ligase TRIM50 (Trim50) from Rattus norvegicus (Rat).